Consider the following 425-residue polypeptide: Glucan endo-1,3-beta-glucosidase 10 (425 aa).

The signal sequence occupies residues 1-26 (MASSSLQSLFSLFCLALFSLPLIVSS). E119 (proton donor) is an active-site residue. The N-linked (GlcNAc...) asparagine glycan is linked to N124. Catalysis depends on E266, which acts as the Nucleophile. Positions 347-387 (GIKTSSTHSSGSGSSNSTGGSSSGGGGNTGGSSSGGGIYQP) are disordered. Positions 350–366 (TSSTHSSGSGSSNSTGG) are enriched in low complexity. N362 is a glycosylation site (N-linked (GlcNAc...) asparagine). A compositionally biased stretch (gly residues) spans 367-384 (SSSGGGGNTGGSSSGGGI). The GPI-anchor amidated serine moiety is linked to residue S401. Residues 402–425 (AGGKGRFVECVLFFFLLCIIKLRL) constitute a propeptide, removed in mature form.

This sequence belongs to the glycosyl hydrolase 17 family. In terms of tissue distribution, highly expressed in flowers and siliques.

It localises to the cell membrane. The protein localises to the cell junction. The protein resides in the plasmodesma. The catalysed reaction is Hydrolysis of (1-&gt;3)-beta-D-glucosidic linkages in (1-&gt;3)-beta-D-glucans.. Its function is as follows. Plasmodesmal-associated membrane beta-1,3-glucanase involved in plasmodesmal callose degradation and functions in the gating of plasmodesmata. This Arabidopsis thaliana (Mouse-ear cress) protein is Glucan endo-1,3-beta-glucosidase 10.